Here is a 311-residue protein sequence, read N- to C-terminus: Thioredoxin reductase (311 aa).

FAD contacts are provided by residues 31–39 (FEKGMPGGQ) and 32–39 (EKGMPGGQ). Cys133 and Cys136 form a disulfide bridge. 281–290 (DIRIFAPKQV) lines the FAD pocket.

This sequence belongs to the class-II pyridine nucleotide-disulfide oxidoreductase family. Homodimer. Requires FAD as cofactor.

The protein resides in the cytoplasm. It carries out the reaction [thioredoxin]-dithiol + NADP(+) = [thioredoxin]-disulfide + NADPH + H(+). This is Thioredoxin reductase (trxB) from Helicobacter pylori (strain J99 / ATCC 700824) (Campylobacter pylori J99).